The primary structure comprises 222 residues: MPIMIKICGLRTEETLDAALDLGADMVGFVSFSKSPRHVSLDLASHLGKRVGDRALKVLLTVNADDASLAAGIAALDPQMLQVHGRETPERIASIRARFGLPVMKAISIGDYSDLVQIPLFDAVADLLLFDAKPKAPGGLPGGNGTAFDWSLLRHVETRKPWLLAGGLTSQNVAGAIAATNAQGVDVSSGVESAAGVKDLAKMAAFIEAARKPQLSSQRHLS.

Belongs to the TrpF family.

The enzyme catalyses N-(5-phospho-beta-D-ribosyl)anthranilate = 1-(2-carboxyphenylamino)-1-deoxy-D-ribulose 5-phosphate. Its pathway is amino-acid biosynthesis; L-tryptophan biosynthesis; L-tryptophan from chorismate: step 3/5. The protein is N-(5'-phosphoribosyl)anthranilate isomerase of Beijerinckia indica subsp. indica (strain ATCC 9039 / DSM 1715 / NCIMB 8712).